Here is a 97-residue protein sequence, read N- to C-terminus: Large ribosomal subunit protein bL27 (97 aa).

Residues 1–23 form a disordered region; sequence MAHKKGASSSRNGRDSTSKRLGV.

It belongs to the bacterial ribosomal protein bL27 family.

The protein is Large ribosomal subunit protein bL27 of Acidothermus cellulolyticus (strain ATCC 43068 / DSM 8971 / 11B).